The primary structure comprises 553 residues: Meiotic expression up-regulated protein 18 (553 aa).

Residues 267–305 are disordered; the sequence is SNETLCSNDSKHRIARLKNEDNTQKPISKKRKSKKASHK. Basic and acidic residues predominate over residues 275–289; sequence DSKHRIARLKNEDNT. Over residues 293–304 the composition is skewed to basic residues; sequence ISKKRKSKKASH.

The polypeptide is Meiotic expression up-regulated protein 18 (meu18) (Schizosaccharomyces pombe (strain 972 / ATCC 24843) (Fission yeast)).